We begin with the raw amino-acid sequence, 544 residues long: Phosphoenolpyruvate carboxykinase (ATP) (544 aa).

246–253 contacts ATP; sequence GLSGTGKT.

This sequence belongs to the phosphoenolpyruvate carboxykinase (ATP) family.

The catalysed reaction is oxaloacetate + ATP = phosphoenolpyruvate + ADP + CO2. Its pathway is carbohydrate biosynthesis; gluconeogenesis. This chain is Phosphoenolpyruvate carboxykinase (ATP) (PCK1), found in Candida glabrata (strain ATCC 2001 / BCRC 20586 / JCM 3761 / NBRC 0622 / NRRL Y-65 / CBS 138) (Yeast).